The chain runs to 230 residues: Cytidylate kinase (230 aa).

Residue 12 to 20 (GPSGAGKGT) coordinates ATP.

This sequence belongs to the cytidylate kinase family. Type 1 subfamily.

The protein resides in the cytoplasm. The catalysed reaction is CMP + ATP = CDP + ADP. The enzyme catalyses dCMP + ATP = dCDP + ADP. In Shewanella oneidensis (strain ATCC 700550 / JCM 31522 / CIP 106686 / LMG 19005 / NCIMB 14063 / MR-1), this protein is Cytidylate kinase.